We begin with the raw amino-acid sequence, 441 residues long: Zinc finger and BTB domain-containing protein 8A (441 aa).

A BTB domain is found at 24–92 (CDCSILVEGK…VYSGKLSLTG (69 aa)). 2 stretches are compositionally biased toward polar residues: residues 146–170 (ERSS…SPDQ) and 178–197 (KSWS…QQPL). The disordered stretch occupies residues 146-252 (ERSSFYSSGW…SEEQAQMNAE (107 aa)). 2 positions are modified to phosphoserine: Ser161 and Ser167. Glycyl lysine isopeptide (Lys-Gly) (interchain with G-Cter in SUMO2) cross-links involve residues Lys178, Lys182, and Lys199. Residues 198–208 (TKHEQRKDSIK) are compositionally biased toward basic and acidic residues. Residues 234-248 (SDSSSHASQSEEQAQ) are compositionally biased toward low complexity. 2 consecutive C2H2-type zinc fingers follow at residues 282 to 304 (FKCP…LRCH) and 310 to 333 (YPCQ…RTIH). Lys437 is covalently cross-linked (Glycyl lysine isopeptide (Lys-Gly) (interchain with G-Cter in SUMO2)).

It localises to the nucleus. Its function is as follows. May be involved in transcriptional regulation. The chain is Zinc finger and BTB domain-containing protein 8A (ZBTB8A) from Bos taurus (Bovine).